An 87-amino-acid polypeptide reads, in one-letter code: Defensin-like protein 81 (87 aa).

Positions 1-27 (MTIKKFLPLLLSSLMVYSLILLPIISG) are cleaved as a signal peptide. Intrachain disulfides connect C33–C69, C37–C57, C43–C67, and C47–C68.

It belongs to the DEFL family.

It is found in the secreted. The protein is Defensin-like protein 81 of Arabidopsis thaliana (Mouse-ear cress).